A 270-amino-acid polypeptide reads, in one-letter code: tRNA pseudouridine synthase A (270 aa).

The active-site Nucleophile is the Asp-60. The tract at residues Phe-107–Phe-111 is RNA binding. Substrate is bound at residue Tyr-118. The interaction with tRNA stretch occupies residues Gln-168 to Arg-172.

Belongs to the tRNA pseudouridine synthase TruA family. In terms of assembly, homodimer.

The catalysed reaction is uridine(38/39/40) in tRNA = pseudouridine(38/39/40) in tRNA. Functionally, formation of pseudouridine at positions 38, 39 and 40 in the anticodon stem and loop of transfer RNAs. In Shigella boydii serotype 4 (strain Sb227), this protein is tRNA pseudouridine synthase A.